Reading from the N-terminus, the 196-residue chain is Molybdenum cofactor guanylyltransferase (196 aa).

Residues 10-12, lysine 23, asparagine 51, aspartate 69, and aspartate 99 each bind GTP; that span reads LAG. Aspartate 99 provides a ligand contact to Mg(2+).

The protein belongs to the MobA family. Monomer. Requires Mg(2+) as cofactor.

The protein resides in the cytoplasm. It catalyses the reaction Mo-molybdopterin + GTP + H(+) = Mo-molybdopterin guanine dinucleotide + diphosphate. Functionally, transfers a GMP moiety from GTP to Mo-molybdopterin (Mo-MPT) cofactor (Moco or molybdenum cofactor) to form Mo-molybdopterin guanine dinucleotide (Mo-MGD) cofactor. The chain is Molybdenum cofactor guanylyltransferase from Shewanella woodyi (strain ATCC 51908 / MS32).